We begin with the raw amino-acid sequence, 873 residues long: Alanine--tRNA ligase (873 aa).

Zn(2+) contacts are provided by His562, His566, Cys664, and His668.

This sequence belongs to the class-II aminoacyl-tRNA synthetase family. Requires Zn(2+) as cofactor.

It is found in the cytoplasm. It carries out the reaction tRNA(Ala) + L-alanine + ATP = L-alanyl-tRNA(Ala) + AMP + diphosphate. Its function is as follows. Catalyzes the attachment of alanine to tRNA(Ala) in a two-step reaction: alanine is first activated by ATP to form Ala-AMP and then transferred to the acceptor end of tRNA(Ala). Also edits incorrectly charged Ser-tRNA(Ala) and Gly-tRNA(Ala) via its editing domain. The protein is Alanine--tRNA ligase of Photobacterium profundum (strain SS9).